Reading from the N-terminus, the 193-residue chain is Major structural subunit of bundle-forming pilus (193 aa).

A propeptide spanning residues 1 to 13 (MVSKIMNKKYEKG) is cleaved from the precursor. The residue at position 14 (Leu-14) is an N-methylleucine. A helical membrane pass occupies residues 14–35 (LSLIESAMVLALAATVTAGVMF). Cys-129 and Cys-179 are disulfide-bonded.

The protein belongs to the N-Me-Phe pilin family. In terms of assembly, 10 to 100 laterally aligned filaments or bundle-forming pili coalesce into rope-like bundles. These form linkages between the bacteria within the enteropathogenic E.coli (EPEC) microcolonies that are attached to epithelial cells.

It localises to the fimbrium. The protein localises to the membrane. Functionally, major repeating bundle-forming pilus (BFP) subunit. Is required for EPEC localized adherence. This Escherichia coli O111:H- protein is Major structural subunit of bundle-forming pilus (bfpA).